Consider the following 2920-residue polypeptide: Cadherin-related hmr-1 (2920 aa).

A signal peptide spans 1–19 (MSWNILLILLISNLDEVLA). The Extracellular segment spans residues 20–2779 (KTLLKLPSNA…AVSKLGISSP (2760 aa)). Asn-72, Asn-243, Asn-253, Asn-339, and Asn-508 each carry an N-linked (GlcNAc...) asparagine glycan. 14 consecutive Cadherin domains span residues 322 to 422 (SSRS…PPSF), 425 to 530 (SPLP…PPQF), 531 to 642 (AKQE…VPTF), 643 to 747 (TRPL…SAVF), 749 to 865 (PTSQ…KPEF), 871 to 979 (YSDI…SPQF), 980 to 1093 (ERPS…APKW), 1097 to 1211 (PDCK…VPQF), 1212 to 1335 (TVDL…APSF), 1336 to 1436 (EEQK…APQF), 1438 to 1546 (QQKY…SPIF), 1548 to 1661 (ERLF…APFF), 1662 to 1772 (EKTR…APHI), and 1772 to 1874 (IHGA…EPYT). 4 N-linked (GlcNAc...) asparagine glycosylation sites follow: Asn-658, Asn-685, Asn-715, and Asn-826. Asn-1177 carries an N-linked (GlcNAc...) asparagine glycan. The N-linked (GlcNAc...) asparagine glycan is linked to Asn-1417. The N-linked (GlcNAc...) asparagine glycan is linked to Asn-1646. 3 N-linked (GlcNAc...) asparagine glycosylation sites follow: Asn-1935, Asn-2224, and Asn-2232. The EGF-like 1 domain maps to 2246–2283 (APPACQHSLCHNDGVCHNTNPGFFCECRNDGLKGARCQ). 3 disulfides stabilise this stretch: Cys-2250-Cys-2261, Cys-2255-Cys-2270, and Cys-2272-Cys-2282. The 195-residue stretch at 2284 to 2478 (GTTRSFGGNG…AFEQNSEKGC (195 aa)) folds into the Laminin G-like domain. Residues Asn-2307 and Asn-2332 are each glycosylated (N-linked (GlcNAc...) asparagine). Disulfide bonds link Cys-2452–Cys-2478, Cys-2501–Cys-2515, and Cys-2517–Cys-2526. Positions 2492-2527 (SLNHCIHGDCFADVQGSGAMVAKCVCDPGWGGARCE) constitute an EGF-like 2 domain. A glycan (N-linked (GlcNAc...) asparagine) is linked at Asn-2623. Residues 2780–2800 (AIILILVSLALLILLVMMMVV) form a helical membrane-spanning segment. Topologically, residues 2801 to 2920 (YTRRSPGAFE…VTLESIESAQ (120 aa)) are cytoplasmic. Ser-2839 is modified (phosphoserine). A disordered region spans residues 2858–2891 (IGGHPPHYPPRGMAPPKDDHELNSKIKDLETDQN). A compositionally biased stretch (basic and acidic residues) spans 2873–2887 (PKDDHELNSKIKDLE). Residue Ser-2909 is modified to Phosphoserine. Thr-2912 carries the phosphothreonine modification. A phosphoserine mark is found at Ser-2915 and Ser-2918.

As to quaternary structure, monomer in solution. Isoform a is a component of a core catenin-cadherin complex consisting of hmr-1, hmp-1 and hmp-2; the complex localizes to adherens junctions. Isoform a interacts with hmp-2; the interaction is direct. Isoform a interacts (via intracellular domain) with jac-1. Phosphorylation at T-2912 increases the binding affinity for hmp-2. Post-translationally, sumoylated. Sumoylation prevents accumulation at adherens junctions and decreases the binding affinity for hmp-2. Expressed in epidermal cells (at protein level). As to expression, neuron-specific.

The protein localises to the cell membrane. The protein resides in the cell junction. It is found in the adherens junction. It localises to the cell projection. Its subcellular location is the dendrite. In terms of biological role, cadherins are calcium-dependent cell adhesion proteins. They preferentially interact with themselves in a homophilic manner in connecting cells; cadherins may thus contribute to the sorting of heterogeneous cell types. Required for adherens junction assembly and connecting adherens junctions to the cytoskeleton. Its function is as follows. Isoform a is required for cell migration during body enclosure and cell shape changes during body elongation. Required for proper localization of other junctional components, such as hmp-1, hmp-2, jac-1 and pac-1. Recruitment of pac-1 is required to establish cell polarity, independent of its role in cell adhesion. Required for primodial germ cell ingression and adherence to endodermal cells during gastrulation. Functionally, isoform b is involved in axonal guidance in a subset of motor neurons. This is Cadherin-related hmr-1 from Caenorhabditis elegans.